Reading from the N-terminus, the 323-residue chain is tRNA U34 carboxymethyltransferase (323 aa).

Residues Lys91, Trp105, Lys110, Gly130, 181 to 182 (IE), Met196, Tyr200, and Arg315 each bind carboxy-S-adenosyl-L-methionine.

It belongs to the class I-like SAM-binding methyltransferase superfamily. CmoB family. As to quaternary structure, homotetramer.

It carries out the reaction carboxy-S-adenosyl-L-methionine + 5-hydroxyuridine(34) in tRNA = 5-carboxymethoxyuridine(34) in tRNA + S-adenosyl-L-homocysteine + H(+). Functionally, catalyzes carboxymethyl transfer from carboxy-S-adenosyl-L-methionine (Cx-SAM) to 5-hydroxyuridine (ho5U) to form 5-carboxymethoxyuridine (cmo5U) at position 34 in tRNAs. This Enterobacter sp. (strain 638) protein is tRNA U34 carboxymethyltransferase.